We begin with the raw amino-acid sequence, 134 residues long: MESLSHLVKSTLPNYLSNLPVPDTLGGWFKLSFKDWLALIPPTVVVAGIGYTGYLAFCPAAQDRCSAKKNSGRCNNLIRKHEAKVVDMIDVEDIAEKAAFCRCWKTKNWPYCDGSHGEHNKQTGDNVGPVVVKK.

The Lumenal segment spans residues 1 to 35 (MESLSHLVKSTLPNYLSNLPVPDTLGGWFKLSFKD). Residues 36 to 58 (WLALIPPTVVVAGIGYTGYLAFC) form a helical membrane-spanning segment. The Cytoplasmic portion of the chain corresponds to 59-134 (PAAQDRCSAK…DNVGPVVVKK (76 aa)). Residues Cys101, Cys103, Cys112, and His116 each contribute to the [2Fe-2S] cluster site.

The protein belongs to the CISD protein family. CISD2 subfamily. [2Fe-2S] cluster is required as a cofactor.

The protein localises to the endoplasmic reticulum membrane. The protein is CDGSH iron-sulfur domain-containing protein 2 homolog of Drosophila willistoni (Fruit fly).